Reading from the N-terminus, the 562-residue chain is Sulfite reductase [NADPH] hemoprotein beta-component (562 aa).

4 residues coordinate [4Fe-4S] cluster: Cys-428, Cys-434, Cys-473, and Cys-477. Cys-477 serves as a coordination point for siroheme.

Belongs to the nitrite and sulfite reductase 4Fe-4S domain family. Alpha(8)-beta(8). The alpha component is a flavoprotein, the beta component is a hemoprotein. It depends on siroheme as a cofactor. [4Fe-4S] cluster serves as cofactor.

It carries out the reaction hydrogen sulfide + 3 NADP(+) + 3 H2O = sulfite + 3 NADPH + 4 H(+). It participates in sulfur metabolism; hydrogen sulfide biosynthesis; hydrogen sulfide from sulfite (NADPH route): step 1/1. Its function is as follows. Component of the sulfite reductase complex that catalyzes the 6-electron reduction of sulfite to sulfide. This is one of several activities required for the biosynthesis of L-cysteine from sulfate. The protein is Sulfite reductase [NADPH] hemoprotein beta-component of Myxococcus xanthus (strain DK1622).